Consider the following 252-residue polypeptide: 3-dehydroquinate dehydratase (252 aa).

Residues Ser21, 46-48, and Arg82 contribute to the 3-dehydroquinate site; that span reads EWR. His143 serves as the catalytic Proton donor/acceptor. Lys170 acts as the Schiff-base intermediate with substrate in catalysis. The 3-dehydroquinate site is built by Arg213, Ser232, and Gln236.

The protein belongs to the type-I 3-dehydroquinase family. As to quaternary structure, homodimer.

It catalyses the reaction 3-dehydroquinate = 3-dehydroshikimate + H2O. Its pathway is metabolic intermediate biosynthesis; chorismate biosynthesis; chorismate from D-erythrose 4-phosphate and phosphoenolpyruvate: step 3/7. Its function is as follows. Involved in the third step of the chorismate pathway, which leads to the biosynthesis of aromatic amino acids. Catalyzes the cis-dehydration of 3-dehydroquinate (DHQ) and introduces the first double bond of the aromatic ring to yield 3-dehydroshikimate. The polypeptide is 3-dehydroquinate dehydratase (Escherichia coli O17:K52:H18 (strain UMN026 / ExPEC)).